Consider the following 182-residue polypeptide: Small heat shock protein hspG1 (182 aa).

One can recognise a sHSP domain in the interval 43–182 (IKRIDIIPSM…SNSSFKININ (140 aa)).

It belongs to the small heat shock protein (HSP20) family.

The protein is Small heat shock protein hspG1 (hspG1) of Dictyostelium discoideum (Social amoeba).